We begin with the raw amino-acid sequence, 340 residues long: Sulfotransferase 2B1 (340 aa).

67-72 contacts 3'-phosphoadenylyl sulfate; the sequence is KSGTNW. Substrate is bound by residues W95 and W100. H122 (proton acceptor) is an active-site residue. Residues R144, S152, Y207, 241–246, and 271–273 contribute to the 3'-phosphoadenylyl sulfate site; these read SAFAAM and RKG. The segment at 301–340 is disordered; it reads LPSFPWDRSAEDGSPDGETEPSPSPSPGLASDDPNPGSSQ.

It belongs to the sulfotransferase 1 family. Isoform 1 is expressed in skin and testis. Higher level of isoform 2 expressed in skin and intestine, moderate level in the kidney, low level in liver, stomach and placenta.

The protein resides in the cytoplasm. It is found in the cytosol. It localises to the microsome. Its subcellular location is the nucleus. It catalyses the reaction an alcohol + 3'-phosphoadenylyl sulfate = an alkyl sulfate + adenosine 3',5'-bisphosphate + H(+). The catalysed reaction is pregnenolone + 3'-phosphoadenylyl sulfate = pregnenolone sulfate + adenosine 3',5'-bisphosphate + H(+). The enzyme catalyses 3beta-hydroxyandrost-5-en-17-one + 3'-phosphoadenylyl sulfate = dehydroepiandrosterone 3-sulfate + adenosine 3',5'-bisphosphate + H(+). It carries out the reaction cholesterol + 3'-phosphoadenylyl sulfate = cholesterol sulfate + adenosine 3',5'-bisphosphate + H(+). In terms of biological role, sulfotransferase that utilizes 3'-phospho-5'-adenylyl sulfate (PAPS) as sulfonate donor to catalyze the sulfate conjugation. Sulfonation increases the water solubility of most compounds, and therefore their renal excretion, but it can also result in bioactivation to form active metabolites. Sulfonates cholesterol. Catalyzes sulfation of the 3beta-hydroxyl groups of steroids, such as, pregnenolone and dehydroepiandrosterone (DHEA). Conjugates efficiently cholesterol but has a greater affinity for pregnenolone sulfation. Does not show high activity with DHEA. Plays a role in epidermal cholesterol metabolism and in the regulation of epidermal proliferation and differentiation. Functionally, prefers pregnenolone over DHEA as a substrate and does not sulfate cholesterol. This chain is Sulfotransferase 2B1, found in Rattus norvegicus (Rat).